A 354-amino-acid chain; its full sequence is Uroporphyrinogen decarboxylase (354 aa).

Residues 27–31 (RQAGR), Phe46, Asp77, Tyr154, Thr209, and His327 each bind substrate.

It belongs to the uroporphyrinogen decarboxylase family. In terms of assembly, homodimer.

The protein localises to the cytoplasm. It carries out the reaction uroporphyrinogen III + 4 H(+) = coproporphyrinogen III + 4 CO2. Its pathway is porphyrin-containing compound metabolism; protoporphyrin-IX biosynthesis; coproporphyrinogen-III from 5-aminolevulinate: step 4/4. In terms of biological role, catalyzes the decarboxylation of four acetate groups of uroporphyrinogen-III to yield coproporphyrinogen-III. The protein is Uroporphyrinogen decarboxylase of Salmonella typhi.